Consider the following 292-residue polypeptide: MNTSDRIKSTQIALDRDLREQALLLLKEVRAVDGVDALSEQFVRGLAEPGLGHSHLIVTLNDKLVGLAATDEETTELAVHPAHRRQGIGKALIDATPTSSIWAHGNTAGAQALASTLRMKKTRELLVMEISDRALDDSAAYKDPDGITHSSLANAPVEKSVAEAKWLQSNNEAFDWHPEQGGWTTHRLAQAQKADWYKDSDVLFLWDGEEIVGFHWVKQHSPELQEIYVVGLSSAYRGRGLGDPLVRLGLHHMRAHGARKVILYVEAGNTPAVAAYEKLGFTVAESHVVYEK.

N-acetyltransferase domains are found at residues 13-168 (ALDR…KWLQ) and 159-292 (KSVA…VYEK). E40 lines the 1D-myo-inositol 2-(L-cysteinylamino)-2-deoxy-alpha-D-glucopyranoside pocket. Acetyl-CoA is bound at residue 77–79 (LAV). 3 residues coordinate 1D-myo-inositol 2-(L-cysteinylamino)-2-deoxy-alpha-D-glucopyranoside: E179, K218, and E226. Acetyl-CoA-binding positions include 230 to 232 (VGL) and 237 to 243 (RGRGLGD). Y264 serves as a coordination point for 1D-myo-inositol 2-(L-cysteinylamino)-2-deoxy-alpha-D-glucopyranoside.

It belongs to the acetyltransferase family. MshD subfamily. Monomer.

It carries out the reaction 1D-myo-inositol 2-(L-cysteinylamino)-2-deoxy-alpha-D-glucopyranoside + acetyl-CoA = mycothiol + CoA + H(+). Functionally, catalyzes the transfer of acetyl from acetyl-CoA to desacetylmycothiol (Cys-GlcN-Ins) to form mycothiol. The polypeptide is Mycothiol acetyltransferase (Corynebacterium glutamicum (strain ATCC 13032 / DSM 20300 / JCM 1318 / BCRC 11384 / CCUG 27702 / LMG 3730 / NBRC 12168 / NCIMB 10025 / NRRL B-2784 / 534)).